A 320-amino-acid chain; its full sequence is 2-oxoglutarate-dependent dioxygenase thnC (320 aa).

Residues 174 to 278 form the Fe2OG dioxygenase domain; sequence PLVQMKLIRY…HSCATFWHGD (105 aa). The Fe cation site is built by H199, D201, and H258. R268 is a 2-oxoglutarate binding site.

The protein belongs to the iron/ascorbate-dependent oxidoreductase family. It depends on Fe(2+) as a cofactor.

It carries out the reaction trihazone A + 2-oxoglutarate + O2 + H(+) = trihazone D + succinate + 2 CO2 + H2O. It functions in the pathway secondary metabolite biosynthesis. Functionally, 2-oxoglutarate-dependent dioxygenase; part of the gene cluster that produces the tetronate natural products trihazones. ThnC catalyzes the oxidative decarboxylation of trihazone A to trihazone D. The C4 hydrogen is first abstracted by the iron-oxo species generated in ThnC to give a tertiary radical at C4. This is followed by decarboxylation and removal of the second electron by the FeIII-OH center to give trihazone D. The pathway begins with the formation of trihazone A by the hybrid PKS-NRPS synthetase thnA and the trans-enoyl reductase thnE. Trihazone A is further decarboxylated by the 2-oxoglutarate-dependent dioxygenase thnC to produce trihazone D. The function of the FAD-dependent monooxygenase thnD has still to be identified. This chain is 2-oxoglutarate-dependent dioxygenase thnC, found in Trichoderma harzianum (Hypocrea lixii).